The primary structure comprises 276 residues: Pantothenate synthetase (276 aa).

Position 27–34 (27–34) interacts with ATP; it reads MGALHRGH. Histidine 34 serves as the catalytic Proton donor. Glutamine 58 serves as a coordination point for (R)-pantoate. Residue glutamine 58 coordinates beta-alanine. An ATP-binding site is contributed by 147–150; it reads GKKD. Residue glutamine 153 participates in (R)-pantoate binding. Residues valine 176 and 184–187 contribute to the ATP site; that span reads LSSR.

Belongs to the pantothenate synthetase family. Homodimer.

It localises to the cytoplasm. It carries out the reaction (R)-pantoate + beta-alanine + ATP = (R)-pantothenate + AMP + diphosphate + H(+). The protein operates within cofactor biosynthesis; (R)-pantothenate biosynthesis; (R)-pantothenate from (R)-pantoate and beta-alanine: step 1/1. Its function is as follows. Catalyzes the condensation of pantoate with beta-alanine in an ATP-dependent reaction via a pantoyl-adenylate intermediate. This chain is Pantothenate synthetase, found in Helicobacter pylori (strain J99 / ATCC 700824) (Campylobacter pylori J99).